The following is a 432-amino-acid chain: Glutamate-1-semialdehyde 2,1-aminomutase (432 aa).

N6-(pyridoxal phosphate)lysine is present on Lys-272.

It belongs to the class-III pyridoxal-phosphate-dependent aminotransferase family. HemL subfamily. In terms of assembly, homodimer. Pyridoxal 5'-phosphate is required as a cofactor.

Its subcellular location is the cytoplasm. It carries out the reaction (S)-4-amino-5-oxopentanoate = 5-aminolevulinate. The protein operates within porphyrin-containing compound metabolism; protoporphyrin-IX biosynthesis; 5-aminolevulinate from L-glutamyl-tRNA(Glu): step 2/2. It functions in the pathway porphyrin-containing compound metabolism; chlorophyll biosynthesis. The protein is Glutamate-1-semialdehyde 2,1-aminomutase of Trichormus variabilis (strain ATCC 29413 / PCC 7937) (Anabaena variabilis).